The primary structure comprises 647 residues: Macrolide export ATP-binding/permease protein MacB (647 aa).

Residues Leu-6–Asn-244 form the ABC transporter domain. ATP is bound at residue Gly-42–Ser-49. A run of 4 helical transmembrane segments spans residues Phe-273–Gly-293, Leu-522–Ile-542, Leu-577–Phe-597, and Ser-612–Ala-632.

It belongs to the ABC transporter superfamily. Macrolide exporter (TC 3.A.1.122) family. As to quaternary structure, homodimer. Part of the tripartite efflux system MacAB-TolC, which is composed of an inner membrane transporter, MacB, a periplasmic membrane fusion protein, MacA, and an outer membrane component, TolC. The complex forms a large protein conduit and can translocate molecules across both the inner and outer membranes. Interacts with MacA.

The protein resides in the cell inner membrane. Part of the tripartite efflux system MacAB-TolC. MacB is a non-canonical ABC transporter that contains transmembrane domains (TMD), which form a pore in the inner membrane, and an ATP-binding domain (NBD), which is responsible for energy generation. Confers resistance against macrolides. This is Macrolide export ATP-binding/permease protein MacB from Shewanella sp. (strain W3-18-1).